Reading from the N-terminus, the 390-residue chain is Neutrophil cytosol factor 1 (390 aa).

One can recognise a PX domain in the interval 4-125; that stretch reads TFIRHIALLG…DFFKVRPDDL (122 aa). SH3 domains follow at residues 156–215 and 226–285; these read IILQ…PLDS and YAGE…KAGE. A disordered region spans residues 291–390; that stretch reads QRQIRGRGAP…STKRKLTSAV (100 aa). Residues serine 304, serine 321, serine 329, and serine 346 each carry the phosphoserine modification. A compositionally biased stretch (basic and acidic residues) spans 374-383; that stretch reads ILHRCTESTK.

As to quaternary structure, component of the phagocyte NADPH oxidase complex composed of an obligatory core heterodimer formed by the membrane proteins CYBA and CYBB and the cytosolic regulatory subunits NCF1/p47-phox, NCF2/p67-phox, NCF4/p40-phox and the small GTPase RAC1 or RAC2. Part of a cytosolic complex composed at least by NCF1, NCF2 and NCF4. Interacts (via C-terminus) with NCF2 (via the C-terminal SH3 domain). Interacts with NCF4. Interacts with CYBB. Interacts (via the second SH3 domain) with CYBA; interaction is phosphorylation-dependent. Interacts with NOXA1. Interacts with ADAM15. Interacts with TRAF4. Interacts with FASLG. Interacts with PARK7 (via C-terminus); the interaction is enhanced by LPS and modulates NCF1 phosphorylation and membrane translocation. Post-translationally, phosphorylated by PRKCD; phosphorylation induces activation of NCF1, leading to assembly and activation of the NADPH oxidase complex.

The protein localises to the cytoplasm. It localises to the cytosol. It is found in the membrane. Subunit of the phagocyte NADPH oxidase complex that mediates the transfer of electrons from cytosolic NADPH to O2 to produce the superoxide anion (O2(-)). In the activated complex, electrons are first transferred from NADPH to flavin adenine dinucleotide (FAD) and subsequently transferred via two heme molecules to molecular oxygen, producing superoxide through an outer-sphere reaction. Activation of the NADPH oxidase complex is initiated by the assembly of cytosolic subunits of the NADPH oxidase complex with the core NADPH oxidase complex to form a complex at the plasma membrane or phagosomal membrane. This activation process is initiated by phosphorylation dependent binding of the cytosolic NCF1/p47-phox subunit to the C-terminus of CYBA/p22-phox. The polypeptide is Neutrophil cytosol factor 1 (Mus musculus (Mouse)).